A 155-amino-acid chain; its full sequence is SsrA-binding protein (155 aa).

The protein belongs to the SmpB family.

The protein localises to the cytoplasm. Its function is as follows. Required for rescue of stalled ribosomes mediated by trans-translation. Binds to transfer-messenger RNA (tmRNA), required for stable association of tmRNA with ribosomes. tmRNA and SmpB together mimic tRNA shape, replacing the anticodon stem-loop with SmpB. tmRNA is encoded by the ssrA gene; the 2 termini fold to resemble tRNA(Ala) and it encodes a 'tag peptide', a short internal open reading frame. During trans-translation Ala-aminoacylated tmRNA acts like a tRNA, entering the A-site of stalled ribosomes, displacing the stalled mRNA. The ribosome then switches to translate the ORF on the tmRNA; the nascent peptide is terminated with the 'tag peptide' encoded by the tmRNA and targeted for degradation. The ribosome is freed to recommence translation, which seems to be the essential function of trans-translation. In Geobacillus sp. (strain WCH70), this protein is SsrA-binding protein.